The sequence spans 65 residues: 7 kDa A-type inclusion protein (65 aa).

Residues 1-20 (MSNQNIPQLSEYQTSVSQVA) are compositionally biased toward polar residues. The tract at residues 1-32 (MSNQNIPQLSEYQTSVSQVAVTPPPKPKTPQI) is disordered.

The chain is 7 kDa A-type inclusion protein from Bos taurus (Bovine).